A 446-amino-acid chain; its full sequence is 6-methylsalicylate 1-monooxygenase atA (446 aa).

The chain crosses the membrane as a helical span at residues 7–27 (VSVAIIGGGIGGLSLAIGLLQ). Positions 37 and 50 each coordinate FAD. N-linked (GlcNAc...) asparagine glycosylation occurs at Asn-107. Arg-116 provides a ligand contact to FAD. The active site involves Arg-200. 2 residues coordinate FAD: Asp-311 and Ala-324.

It belongs to the paxM FAD-dependent monooxygenase family. FAD is required as a cofactor.

Its subcellular location is the membrane. It catalyses the reaction 6-methylsalicylate + AH2 + O2 + H(+) = 3-methylcatechol + A + CO2 + H2O. It participates in secondary metabolite biosynthesis. Functionally, 6-methylsalicylate 1-monooxygenase; part of the gene cluster that mediates the biosynthesis of terreic acid, a quinone epoxide inhibitor of Bruton's tyrosine kinase. The first step of the pathway is the synthesis of 6-methylsalicylic acid (6-MSA) by the 6-methylsalicylic acid synthase atX. In the biosynthesis of 6-MSA, atX utilizes one acetyl-CoA and three malonyl-CoAs as its substrates and catalyzes a series of programmed reactions including Claisen condensation, reduction, aldol cyclization, and the hydrolytic cleavage that yields 6-MSA. The 6-methylsalicylate 1-monooxygenase atA then catalyzes the decarboxylative hydroxylation of 6-MSA to 3-methylcatechol. The next step is the conversion of 3-methylcatechol to 3-methyl-1,2,4-benzenetriol by cytochrome P450 monooxygenase atE, which is enhanced by cytochrome P450 monooxygenase atG. Then, the epoxidase atD catalyzes the epoxidation and hydroxyl oxidation of 3-methyl-1,2,4-benzenetriol to terremutin. Lastly, GMC oxidoreductase atC oxidizes terremutin to terreic acid. The sequence is that of 6-methylsalicylate 1-monooxygenase atA from Aspergillus terreus (strain NIH 2624 / FGSC A1156).